A 341-amino-acid chain; its full sequence is Putative UPF0607 protein ENSP00000383783 (341 aa).

The span at 75 to 101 (EVRAEEPKEATEVKDQVETQGQEDNKR) shows a compositional bias: basic and acidic residues. Disordered stretches follow at residues 75 to 115 (EVRA…TSSL) and 216 to 278 (GLLM…PPPA). The span at 234–245 (SSRSSPSRAASH) shows a compositional bias: low complexity.

This sequence belongs to the UPF0607 family.

This is Putative UPF0607 protein ENSP00000383783 from Homo sapiens (Human).